Here is a 484-residue protein sequence, read N- to C-terminus: UDP-N-acetylmuramoyl-L-alanyl-D-glutamate--2,6-diaminopimelate ligase (484 aa).

Ser-30 is a binding site for UDP-N-acetyl-alpha-D-muramoyl-L-alanyl-D-glutamate. 109–115 contributes to the ATP binding site; sequence GTNGKTS. UDP-N-acetyl-alpha-D-muramoyl-L-alanyl-D-glutamate is bound by residues 151 to 152, Ser-178, and Arg-186; that span reads TT. Lys-218 is modified (N6-carboxylysine). Residues Arg-379, 403–406, Gly-455, and Glu-459 contribute to the meso-2,6-diaminopimelate site; that span reads DNPR. A Meso-diaminopimelate recognition motif motif is present at residues 403 to 406; sequence DNPR.

The protein belongs to the MurCDEF family. MurE subfamily. Mg(2+) is required as a cofactor. Carboxylation is probably crucial for Mg(2+) binding and, consequently, for the gamma-phosphate positioning of ATP.

It is found in the cytoplasm. The enzyme catalyses UDP-N-acetyl-alpha-D-muramoyl-L-alanyl-D-glutamate + meso-2,6-diaminopimelate + ATP = UDP-N-acetyl-alpha-D-muramoyl-L-alanyl-gamma-D-glutamyl-meso-2,6-diaminopimelate + ADP + phosphate + H(+). The protein operates within cell wall biogenesis; peptidoglycan biosynthesis. Its function is as follows. Catalyzes the addition of meso-diaminopimelic acid to the nucleotide precursor UDP-N-acetylmuramoyl-L-alanyl-D-glutamate (UMAG) in the biosynthesis of bacterial cell-wall peptidoglycan. This chain is UDP-N-acetylmuramoyl-L-alanyl-D-glutamate--2,6-diaminopimelate ligase, found in Clostridioides difficile (strain 630) (Peptoclostridium difficile).